A 158-amino-acid chain; its full sequence is Endoribonuclease YbeY (158 aa).

Histidine 118, histidine 122, and histidine 128 together coordinate Zn(2+).

It belongs to the endoribonuclease YbeY family. It depends on Zn(2+) as a cofactor.

It is found in the cytoplasm. Functionally, single strand-specific metallo-endoribonuclease involved in late-stage 70S ribosome quality control and in maturation of the 3' terminus of the 16S rRNA. The sequence is that of Endoribonuclease YbeY from Bartonella henselae (strain ATCC 49882 / DSM 28221 / CCUG 30454 / Houston 1) (Rochalimaea henselae).